A 715-amino-acid polypeptide reads, in one-letter code: Probable GTP diphosphokinase RSH3, chloroplastic (715 aa).

The N-terminal 64 residues, 1-64 (MVVATTIALY…LLFSGASVKS (64 aa)), are a transit peptide targeting the chloroplast. Positions 65 to 74 (SSSSSSSHPS) are enriched in low complexity. The tract at residues 65-84 (SSSSSSSHPSVGEELASIRH) is disordered. Positions 237 to 341 (YLQHCVETAM…IKLADRLHNM (105 aa)) constitute an HD domain.

It belongs to the RelA/SpoT family. As to expression, expressed in roots, hypocotyls, shoots, cotyledons, rosette and cauline leaves, stems, petals, sepals, stamens, pistils and siliques.

It is found in the plastid. It localises to the chloroplast. It carries out the reaction GTP + ATP = guanosine 3'-diphosphate 5'-triphosphate + AMP. Its function is as follows. Possesses ppGpp (guanosine 3'-diphosphate 5'-diphosphate) synthetase activity in vitro and is able to functionally complement E.coli relA mutants. May be involved in a rapid plant ppGpp-mediated response to pathogens and other stresses. The sequence is that of Probable GTP diphosphokinase RSH3, chloroplastic (RSH3) from Arabidopsis thaliana (Mouse-ear cress).